Consider the following 276-residue polypeptide: Octanoyltransferase LipM (276 aa).

The region spanning 31 to 246 (GKVPPTVRFY…GFASGLEVEL (216 aa)) is the BPL/LPL catalytic domain. C148 acts as the Acyl-thioester intermediate in catalysis.

The protein belongs to the octanoyltransferase LipM family. In terms of assembly, monomer.

It catalyses the reaction octanoyl-[ACP] + L-lysyl-[protein] = N(6)-octanoyl-L-lysyl-[protein] + holo-[ACP] + H(+). The protein operates within protein modification; protein lipoylation via endogenous pathway; protein N(6)-(lipoyl)lysine from octanoyl-[acyl-carrier-protein]. Functionally, catalyzes the transfer of endogenously produced octanoic acid from octanoyl-acyl-carrier-protein onto the lipoyl domain of GcvH, an intermediate carrier during protein lipoylation. In Brevibacillus brevis (strain 47 / JCM 6285 / NBRC 100599), this protein is Octanoyltransferase LipM.